Reading from the N-terminus, the 403-residue chain is G2/mitotic-specific cyclin-B3 (403 aa).

Disordered regions lie at residues 1–86 and 102–122; these read MPVA…APPA and RKTPPADVPVEPEKDSVPEEP. Over residues 7–25 the composition is skewed to polar residues; it reads SKAQSSKQPRASKAPSVTE. Residues 51-59 carry the D-box motif; it reads RSAFGDITN.

It belongs to the cyclin family. Cyclin AB subfamily. In terms of assembly, interacts with the CDK1 and CDK2 protein kinases. Post-translationally, ubiquitinated, leading to its degradation.

It is found in the nucleus. Functionally, cyclins are positive regulatory subunits of the cyclin-dependent kinases (CDKs), and thereby play an essential role in the control of the cell cycle, notably via their destruction during cell division. Could be involved at the G2/M (mitosis or meiosis) transition. G2/M cyclins accumulate steadily during G2 and are abruptly destroyed at mitosis. In Gallus gallus (Chicken), this protein is G2/mitotic-specific cyclin-B3 (CCNB3).